We begin with the raw amino-acid sequence, 301 residues long: Immediate early response gene 5-like protein (301 aa).

This sequence belongs to the IER family.

In Danio rerio (Zebrafish), this protein is Immediate early response gene 5-like protein (ier5l).